The primary structure comprises 224 residues: Putative gastrointestinal growth factor xP4 (224 aa).

Residues 1–17 (MANSVFWAIAVALVLGA) form the signal peptide. 4 consecutive P-type domains span residues 25–68 (YRCG…YTPW), 73–117 (TICN…YQPI), 123–167 (RDCS…FKPE), and 173–216 (LQCA…FYPD). Disulfide bonds link cysteine 27-cysteine 53, cysteine 37-cysteine 52, cysteine 47-cysteine 64, cysteine 75-cysteine 102, cysteine 86-cysteine 101, cysteine 96-cysteine 113, cysteine 125-cysteine 152, cysteine 136-cysteine 151, cysteine 146-cysteine 163, cysteine 175-cysteine 201, cysteine 185-cysteine 200, and cysteine 195-cysteine 212. N-linked (GlcNAc...) asparagine glycosylation occurs at asparagine 104.

In terms of processing, glycosylated. Stomach mucosa.

The protein resides in the secreted. May act as a growth factor. In Xenopus laevis (African clawed frog), this protein is Putative gastrointestinal growth factor xP4 (p4).